Reading from the N-terminus, the 460-residue chain is Mitochondrial distribution and morphology protein 34 (460 aa).

One can recognise an SMP-LTD domain in the interval 1-196; it reads MSFKFDWESL…LPGIIHRLSQ (196 aa). Residues 304–321 are compositionally biased toward basic residues; the sequence is HNHQAPKRRTIKYKRKSK. 2 disordered regions span residues 304–356 and 368–460; these read HNHQ…PSRE and EPSS…AYSG. 2 stretches are compositionally biased toward low complexity: residues 330-355 and 393-405; these read STEV…TPSR and SPPS…DTSL.

It belongs to the MDM34 family. As to quaternary structure, component of the ER-mitochondria encounter structure (ERMES) or MDM complex, composed of MMM1, MDM10, MDM12 and MDM34.

The protein localises to the mitochondrion outer membrane. Its function is as follows. Component of the ERMES/MDM complex, which serves as a molecular tether to connect the endoplasmic reticulum (ER) and mitochondria. Components of this complex are involved in the control of mitochondrial shape and protein biogenesis, and function in nonvesicular lipid trafficking between the ER and mitochondria. MDM34 is required for the interaction of the ER-resident membrane protein MMM1 and the outer mitochondrial membrane-resident beta-barrel protein MDM10. This Yarrowia lipolytica (strain CLIB 122 / E 150) (Yeast) protein is Mitochondrial distribution and morphology protein 34.